The following is a 449-amino-acid chain: Phosphoglucosamine mutase (449 aa).

Residue Ser100 is the Phosphoserine intermediate of the active site. 4 residues coordinate Mg(2+): Ser100, Asp240, Asp242, and Asp244. Ser100 carries the post-translational modification Phosphoserine.

The protein belongs to the phosphohexose mutase family. It depends on Mg(2+) as a cofactor. In terms of processing, activated by phosphorylation.

The enzyme catalyses alpha-D-glucosamine 1-phosphate = D-glucosamine 6-phosphate. Its function is as follows. Catalyzes the conversion of glucosamine-6-phosphate to glucosamine-1-phosphate. The sequence is that of Phosphoglucosamine mutase from Clostridium novyi (strain NT).